A 114-amino-acid chain; its full sequence is DNA-directed RNA polymerase subunit Rpo4 (114 aa).

Belongs to the eukaryotic RPB4 RNA polymerase subunit family. Part of the 13-subunit RNA polymerase complex. Forms a stalk with Rpo7 that extends from the main structure. Post-translationally, in purified enzyme appears as 5 forms, each differing by about 200 Da of a covalently bound, negatively charged residue. Not glycosylated.

It localises to the cytoplasm. It carries out the reaction RNA(n) + a ribonucleoside 5'-triphosphate = RNA(n+1) + diphosphate. Functionally, DNA-dependent RNA polymerase catalyzes the transcription of DNA into RNA using the four ribonucleoside triphosphates as substrates. This subunit is less well bound than the others. Probably not involved in transcription initiation. The sequence is that of DNA-directed RNA polymerase subunit Rpo4 from Sulfolobus acidocaldarius (strain ATCC 33909 / DSM 639 / JCM 8929 / NBRC 15157 / NCIMB 11770).